The following is an 89-amino-acid chain: Small ribosomal subunit protein bS20 (89 aa).

Belongs to the bacterial ribosomal protein bS20 family.

Functionally, binds directly to 16S ribosomal RNA. The chain is Small ribosomal subunit protein bS20 from Wolbachia sp. subsp. Brugia malayi (strain TRS).